The following is a 230-amino-acid chain: Porin OmpL (230 aa).

Positions 1 to 20 (MKNINAIILLSSLTSASVFA) are cleaved as a signal peptide.

Belongs to the oligogalacturonate-specific porin KdgM (TC 1.B.35) family. OmpL subfamily.

The protein localises to the cell outer membrane. Its function is as follows. Outer membrane channel protein that allows an efficient diffusion of low-molecular-weight solutes such as small sugars and tetraglycine. However, the specific substrate recognized by the OmpL channel is unknown. The polypeptide is Porin OmpL (ompL) (Escherichia coli O157:H7).